A 466-amino-acid polypeptide reads, in one-letter code: 3-isopropylmalate dehydratase large subunit (466 aa).

3 residues coordinate [4Fe-4S] cluster: C345, C405, and C408.

The protein belongs to the aconitase/IPM isomerase family. LeuC type 1 subfamily. In terms of assembly, heterodimer of LeuC and LeuD. Requires [4Fe-4S] cluster as cofactor.

It catalyses the reaction (2R,3S)-3-isopropylmalate = (2S)-2-isopropylmalate. It functions in the pathway amino-acid biosynthesis; L-leucine biosynthesis; L-leucine from 3-methyl-2-oxobutanoate: step 2/4. Its function is as follows. Catalyzes the isomerization between 2-isopropylmalate and 3-isopropylmalate, via the formation of 2-isopropylmaleate. This is 3-isopropylmalate dehydratase large subunit from Microcystis aeruginosa (strain NIES-843 / IAM M-2473).